The primary structure comprises 96 residues: (4S)-4-hydroxy-5-phosphonooxypentane-2,3-dione isomerase (96 aa).

The ABM domain maps to 2-91 (HVTLVEINVK…MTGPRKKTVF (90 aa)).

This sequence belongs to the LsrG family. As to quaternary structure, homodimer.

It localises to the cytoplasm. The enzyme catalyses (2S)-2-hydroxy-3,4-dioxopentyl phosphate = 3-hydroxy-2,4-dioxopentyl phosphate. Functionally, involved in the degradation of phospho-AI-2, thereby terminating induction of the lsr operon and closing the AI-2 signaling cycle. Catalyzes the conversion of (4S)-4-hydroxy-5-phosphonooxypentane-2,3-dione (P-DPD) to 3-hydroxy-5-phosphonooxypentane-2,4-dione (P-HPD). In Yersinia pseudotuberculosis serotype O:1b (strain IP 31758), this protein is (4S)-4-hydroxy-5-phosphonooxypentane-2,3-dione isomerase.